Reading from the N-terminus, the 204-residue chain is Probable chorismate pyruvate-lyase (204 aa).

Residues Arg78, Leu131, and Glu190 each contribute to the substrate site.

The protein belongs to the UbiC family.

It is found in the cytoplasm. It catalyses the reaction chorismate = 4-hydroxybenzoate + pyruvate. It functions in the pathway cofactor biosynthesis; ubiquinone biosynthesis. Removes the pyruvyl group from chorismate, with concomitant aromatization of the ring, to provide 4-hydroxybenzoate (4HB) for the ubiquinone pathway. The protein is Probable chorismate pyruvate-lyase of Shewanella frigidimarina (strain NCIMB 400).